The sequence spans 724 residues: Phosphoribosylformylglycinamidine synthase subunit PurL (724 aa).

Histidine 34 is a catalytic residue. Tyrosine 37 and lysine 75 together coordinate ATP. Glutamate 77 serves as a coordination point for Mg(2+). Residues 78 to 81 and arginine 100 each bind substrate; that span reads SHNH. The active-site Proton acceptor is the histidine 79. Aspartate 101 is a Mg(2+) binding site. Glutamine 221 provides a ligand contact to substrate. Aspartate 249 serves as a coordination point for Mg(2+). 292-294 serves as a coordination point for substrate; that stretch reads ESQ. Residues aspartate 478 and glycine 515 each contribute to the ATP site. Serine 518 lines the substrate pocket.

The protein belongs to the FGAMS family. Monomer. Part of the FGAM synthase complex composed of 1 PurL, 1 PurQ and 2 PurS subunits.

It localises to the cytoplasm. It catalyses the reaction N(2)-formyl-N(1)-(5-phospho-beta-D-ribosyl)glycinamide + L-glutamine + ATP + H2O = 2-formamido-N(1)-(5-O-phospho-beta-D-ribosyl)acetamidine + L-glutamate + ADP + phosphate + H(+). It participates in purine metabolism; IMP biosynthesis via de novo pathway; 5-amino-1-(5-phospho-D-ribosyl)imidazole from N(2)-formyl-N(1)-(5-phospho-D-ribosyl)glycinamide: step 1/2. Its function is as follows. Part of the phosphoribosylformylglycinamidine synthase complex involved in the purines biosynthetic pathway. Catalyzes the ATP-dependent conversion of formylglycinamide ribonucleotide (FGAR) and glutamine to yield formylglycinamidine ribonucleotide (FGAM) and glutamate. The FGAM synthase complex is composed of three subunits. PurQ produces an ammonia molecule by converting glutamine to glutamate. PurL transfers the ammonia molecule to FGAR to form FGAM in an ATP-dependent manner. PurS interacts with PurQ and PurL and is thought to assist in the transfer of the ammonia molecule from PurQ to PurL. The sequence is that of Phosphoribosylformylglycinamidine synthase subunit PurL from Caldivirga maquilingensis (strain ATCC 700844 / DSM 13496 / JCM 10307 / IC-167).